Consider the following 491-residue polypeptide: ADP-specific phosphofructokinase (491 aa).

The region spanning 4 to 486 (EEWEQRHAEA…FVAMLAKIKQ (483 aa)) is the ADPK domain. Mg(2+) contacts are provided by Glu281, Glu312, and Asp470. Asp470 serves as the catalytic Proton acceptor.

The protein belongs to the carbohydrate kinase PfkC family. Mg(2+) serves as cofactor.

It localises to the cytoplasm. The enzyme catalyses beta-D-fructose 6-phosphate + ADP = beta-D-fructose 1,6-bisphosphate + AMP + H(+). It participates in carbohydrate degradation; glycolysis. Functionally, catalyzes the phosphorylation of fructose 6-phosphate to fructose 1,6-bisphosphate using ADP as the phosphate donor. The chain is ADP-specific phosphofructokinase from Methanosarcina acetivorans (strain ATCC 35395 / DSM 2834 / JCM 12185 / C2A).